We begin with the raw amino-acid sequence, 87 residues long: Small ribosomal subunit protein uS17 (87 aa).

Belongs to the universal ribosomal protein uS17 family. Part of the 30S ribosomal subunit.

Its function is as follows. One of the primary rRNA binding proteins, it binds specifically to the 5'-end of 16S ribosomal RNA. In Bacillus thuringiensis (strain Al Hakam), this protein is Small ribosomal subunit protein uS17.